The chain runs to 61 residues: Metallothionein-2 (61 aa).

Met-1 is subject to N-acetylmethionine. The interval 1-29 (MDPNCSCATDGSCSCSGSCKCKECKCTTC) is beta. A divalent metal cation contacts are provided by Cys-5, Cys-7, Cys-13, Cys-15, Cys-19, Cys-21, Cys-24, Cys-26, Cys-29, Cys-33, Cys-34, Cys-36, Cys-37, Cys-41, Cys-44, Cys-48, Cys-50, and Cys-57. An alpha region spans residues 30–61 (KKSCCSCCPVGCAKCSQGCVCKEASEKCSCCA). Ser-58 carries the phosphoserine modification. Residues Cys-59 and Cys-60 each coordinate a divalent metal cation.

It belongs to the metallothionein superfamily. Type 1 family.

In terms of biological role, metallothioneins have a high content of cysteine residues that bind various heavy metals; these proteins are transcriptionally regulated by both heavy metals and glucocorticoids. The sequence is that of Metallothionein-2 (MT2) from Mesocricetus auratus (Golden hamster).